The sequence spans 166 residues: Lipoprotein signal peptidase (166 aa).

The next 3 helical transmembrane spans lie at leucine 10–valine 30, tryptophan 68–leucine 88, and glycine 94–isoleucine 114. Residues aspartate 124 and aspartate 142 contribute to the active site. A helical membrane pass occupies residues phenylalanine 138 to phenylalanine 158.

Belongs to the peptidase A8 family.

The protein localises to the cell inner membrane. The catalysed reaction is Release of signal peptides from bacterial membrane prolipoproteins. Hydrolyzes -Xaa-Yaa-Zaa-|-(S,diacylglyceryl)Cys-, in which Xaa is hydrophobic (preferably Leu), and Yaa (Ala or Ser) and Zaa (Gly or Ala) have small, neutral side chains.. It functions in the pathway protein modification; lipoprotein biosynthesis (signal peptide cleavage). Its function is as follows. This protein specifically catalyzes the removal of signal peptides from prolipoproteins. In Xanthomonas oryzae pv. oryzae (strain MAFF 311018), this protein is Lipoprotein signal peptidase.